The sequence spans 202 residues: Ribosomal RNA small subunit methyltransferase G (202 aa).

S-adenosyl-L-methionine contacts are provided by residues Gly75, Phe80, 125–126 (VQ), and Arg139.

Belongs to the methyltransferase superfamily. RNA methyltransferase RsmG family.

Its subcellular location is the cytoplasm. Specifically methylates the N7 position of a guanine in 16S rRNA. This chain is Ribosomal RNA small subunit methyltransferase G, found in Mesomycoplasma hyopneumoniae (strain 232) (Mycoplasma hyopneumoniae).